A 752-amino-acid chain; its full sequence is Photosystem I P700 chlorophyll a apoprotein A1 (752 aa).

Transmembrane regions (helical) follow at residues 73–96 (IFAA…FHGA), 159–182 (LYVT…FHYH), 198–222 (LNHH…HVSA), 294–312 (ISHH…GHMY), 349–372 (WHAQ…HHMY), 388–414 (LCIF…IFMV), 436–458 (AIIS…LYVH), and 533–551 (FLVH…LILL). [4Fe-4S] cluster is bound by residues Cys-575 and Cys-584. The next 2 membrane-spanning stretches (helical) occupy residues 591 to 612 (HVFL…HFSW) and 666 to 688 (LSAY…MFLF). His-677 contributes to the chlorophyll a' binding site. Chlorophyll a contacts are provided by Met-685 and Tyr-693. A phylloquinone-binding site is contributed by Trp-694. Residues 726 to 746 (AVGVAHYLLGGIATTWAFFHA) traverse the membrane as a helical segment.

This sequence belongs to the PsaA/PsaB family. As to quaternary structure, the PsaA/B heterodimer binds the P700 chlorophyll special pair and subsequent electron acceptors. PSI consists of a core antenna complex that captures photons, and an electron transfer chain that converts photonic excitation into a charge separation. The cyanobacterial PSI reaction center is composed of one copy each of PsaA,B,C,D,E,F,I,J,K,L,M and X, and forms trimeric complexes. It depends on PSI electron transfer chain: 5 chlorophyll a, 1 chlorophyll a', 2 phylloquinones and 3 4Fe-4S clusters. PSI core antenna: 90 chlorophyll a, 22 carotenoids, 3 phospholipids and 1 galactolipid. P700 is a chlorophyll a/chlorophyll a' dimer, A0 is one or more chlorophyll a, A1 is one or both phylloquinones and FX is a shared 4Fe-4S iron-sulfur center. as a cofactor.

The protein resides in the cellular thylakoid membrane. The enzyme catalyses reduced [plastocyanin] + hnu + oxidized [2Fe-2S]-[ferredoxin] = oxidized [plastocyanin] + reduced [2Fe-2S]-[ferredoxin]. Functionally, psaA and PsaB bind P700, the primary electron donor of photosystem I (PSI), as well as the electron acceptors A0, A1 and FX. PSI is a plastocyanin/cytochrome c6-ferredoxin oxidoreductase, converting photonic excitation into a charge separation, which transfers an electron from the donor P700 chlorophyll pair to the spectroscopically characterized acceptors A0, A1, FX, FA and FB in turn. Oxidized P700 is reduced on the lumenal side of the thylakoid membrane by plastocyanin or cytochrome c6. The polypeptide is Photosystem I P700 chlorophyll a apoprotein A1 (Mastigocladus laminosus (Fischerella sp.)).